Consider the following 212-residue polypeptide: ATP synthase F(0) complex subunit a (212 aa).

6 helical membrane-spanning segments follow: residues 3-23 (MMGI…MFTS), 58-78 (WAAM…LGLL), 87-107 (QLSM…LTGL), 128-148 (IPLL…ALGV), 154-174 (LTAG…LMPT), and 179-199 (ALST…VAMI).

It belongs to the ATPase A chain family. As to quaternary structure, component of the ATP synthase complex composed at least of ATP5F1A/subunit alpha, ATP5F1B/subunit beta, ATP5MC1/subunit c (homooctomer), MT-ATP6/subunit a, MT-ATP8/subunit 8, ATP5ME/subunit e, ATP5MF/subunit f, ATP5MG/subunit g, ATP5MK/subunit k, ATP5MJ/subunit j, ATP5F1C/subunit gamma, ATP5F1D/subunit delta, ATP5F1E/subunit epsilon, ATP5PF/subunit F6, ATP5PB/subunit b, ATP5PD/subunit d, ATP5PO/subunit OSCP. ATP synthase complex consists of a soluble F(1) head domain (subunits alpha(3) and beta(3)) - the catalytic core - and a membrane F(0) domain - the membrane proton channel (subunits c, a, 8, e, f, g, k and j). These two domains are linked by a central stalk (subunits gamma, delta, and epsilon) rotating inside the F1 region and a stationary peripheral stalk (subunits F6, b, d, and OSCP). Interacts with DNAJC30; interaction is direct.

It localises to the mitochondrion inner membrane. The catalysed reaction is H(+)(in) = H(+)(out). In terms of biological role, subunit a, of the mitochondrial membrane ATP synthase complex (F(1)F(0) ATP synthase or Complex V) that produces ATP from ADP in the presence of a proton gradient across the membrane which is generated by electron transport complexes of the respiratory chain. ATP synthase complex consist of a soluble F(1) head domain - the catalytic core - and a membrane F(1) domain - the membrane proton channel. These two domains are linked by a central stalk rotating inside the F(1) region and a stationary peripheral stalk. During catalysis, ATP synthesis in the catalytic domain of F(1) is coupled via a rotary mechanism of the central stalk subunits to proton translocation. With the subunit c (ATP5MC1), forms the proton-conducting channel in the F(0) domain, that contains two crucial half-channels (inlet and outlet) that facilitate proton movement from the mitochondrial intermembrane space (IMS) into the matrix. Protons are taken up via the inlet half-channel and released through the outlet half-channel, following a Grotthuss mechanism. The protein is ATP synthase F(0) complex subunit a of Tropidurus montanus (Lizard).